The primary structure comprises 292 residues: Polyisoprenoid diphosphate/phosphate phosphohydrolase PLPP6 (292 aa).

Disordered regions lie at residues 1 to 34 (MPSP…SGGG) and 66 to 86 (GSFP…PPED). The Cytoplasmic portion of the chain corresponds to 1–131 (MPSPRRTIEG…SAWGSVRPLM (131 aa)). The segment covering 10–25 (GRPLGSSGGSSVPGSP) has biased composition (low complexity). Residues serine 24 and serine 67 each carry the phosphoserine modification. The span at 69-79 (PLAASGPAQAA) shows a compositional bias: low complexity. The helical transmembrane segment at 132 to 152 (KLLEISGHGIPWLLGTLYCLL) threads the bilayer. The Lumenal portion of the chain corresponds to 153–161 (RSDSWAGRE). Residues 162–182 (VLMNLLFALLLDLLLVAVIKG) form a helical membrane-spanning segment. Residues 181 to 189 (KGLVRRRRP) form a phosphatase sequence motif I region. At 183-225 (LVRRRRPAHNQKDMFFTLSVDRYSFPSGHATRAALVSRFILNH) the chain is on the cytoplasmic side. The segment at 208–211 (PSGH) is phosphatase sequence motif II. Histidine 211 functions as the Proton donors in the catalytic mechanism. A helical membrane pass occupies residues 226–246 (LVLAIPLRVLVVLWAFVLGLS). A phosphatase sequence motif III region spans residues 246–257 (SRVMLGRHNVTD). Topologically, residues 247-257 (RVMLGRHNVTD) are lumenal. The Nucleophile role is filled by histidine 253. A helical transmembrane segment spans residues 258-278 (VAFGFFLGYMQYSIVDYCWLS). Residues 279-292 (PHNVPVLFVLWNQQ) lie on the Cytoplasmic side of the membrane.

Belongs to the PA-phosphatase related phosphoesterase family. Phosphorylation by PKC activates the phosphatase activity towards presqualene diphosphate.

It is found in the endoplasmic reticulum membrane. The protein localises to the nucleus envelope. The protein resides in the nucleus inner membrane. The enzyme catalyses presqualene diphosphate + H2O = presqualene phosphate + phosphate + H(+). It carries out the reaction presqualene phosphate + H2O = presqualene alcohol + phosphate. The catalysed reaction is (2E,6E)-farnesyl diphosphate + H2O = (2E,6E)-farnesyl phosphate + phosphate + H(+). It catalyses the reaction (2E,6E)-farnesyl phosphate + H2O = (2E,6E)-farnesol + phosphate. The enzyme catalyses (2E,6E,10E)-geranylgeranyl diphosphate + H2O = (2E,6E,10E)-geranylgeranyl phosphate + phosphate + H(+). It carries out the reaction (2E,6E,10E)-geranylgeranyl phosphate + H2O = (2E,6E,10E)-geranylgeraniol + phosphate. The catalysed reaction is (2E)-geranyl diphosphate + H2O = (2E)-geranyl phosphate + phosphate + H(+). It catalyses the reaction (2E)-geranyl phosphate + H2O = (2E)-geraniol + phosphate. The enzyme catalyses 1,2-dihexadecanoyl-sn-glycero-3-phosphate + H2O = 1,2-dihexadecanoyl-sn-glycerol + phosphate. Functionally, magnesium-independent polyisoprenoid diphosphatase that catalyzes the sequential dephosphorylation of presqualene, farnesyl, geranyl and geranylgeranyl diphosphates. Functions in the innate immune response through the dephosphorylation of presqualene diphosphate which acts as a potent inhibitor of the signaling pathways contributing to polymorphonuclear neutrophils activation. May regulate the biosynthesis of cholesterol and related sterols by dephosphorylating presqualene and farnesyl diphosphate, two key intermediates in this biosynthetic pathway. May also play a role in protein prenylation by acting on farnesyl diphosphate and its derivative geranylgeranyl diphosphate, two precursors for the addition of isoprenoid anchors to membrane proteins. Has a lower activity towards phosphatidic acid (PA), but through phosphatidic acid dephosphorylation may participate in the biosynthesis of phospholipids and triacylglycerols. May also act on ceramide-1-P, lysophosphatidic acid (LPA) and sphing-4-enine 1-phosphate/sphingosine-1-phosphate. This Mus musculus (Mouse) protein is Polyisoprenoid diphosphate/phosphate phosphohydrolase PLPP6.